The sequence spans 199 residues: Protein GrpE (199 aa).

A compositionally biased stretch (basic and acidic residues) spans 1–10 (MTNQTEKEQV). The interval 1 to 44 (MTNQTEKEQVEQDVSQATELAQEAQEAQTQDVEPELQQNNEIDP) is disordered. Residues 16 to 30 (QATELAQEAQEAQTQ) show a composition bias toward low complexity.

This sequence belongs to the GrpE family. As to quaternary structure, homodimer.

It localises to the cytoplasm. Participates actively in the response to hyperosmotic and heat shock by preventing the aggregation of stress-denatured proteins, in association with DnaK and GrpE. It is the nucleotide exchange factor for DnaK and may function as a thermosensor. Unfolded proteins bind initially to DnaJ; upon interaction with the DnaJ-bound protein, DnaK hydrolyzes its bound ATP, resulting in the formation of a stable complex. GrpE releases ADP from DnaK; ATP binding to DnaK triggers the release of the substrate protein, thus completing the reaction cycle. Several rounds of ATP-dependent interactions between DnaJ, DnaK and GrpE are required for fully efficient folding. The polypeptide is Protein GrpE (Glaesserella parasuis serovar 5 (strain SH0165) (Haemophilus parasuis)).